The chain runs to 576 residues: Sodium/hydrogen exchanger 8 (576 aa).

11 helical membrane passes run 55-75, 79-99, 118-138, 151-171, 186-206, 256-276, 306-326, 349-369, 374-394, 412-432, and 446-466; these read MTIF…HLLI, LHFL…GAVI, PNMF…YSLH, LFAV…IYFL, FAFG…IFNA, LGYF…TGLI, GLAE…GIVM, VAFL…FSFP, ISFV…NIFP, MFIM…SLHL, and TTIV…MPLI. At T505 the chain carries Phosphothreonine. Residues S566 and S568 each carry the phosphoserine modification.

The protein belongs to the monovalent cation:proton antiporter 1 (CPA1) transporter (TC 2.A.36) family. Predominantly expressed in the liver, skeletal muscle, kidney, and testis. Expressed in both renal cortex and medulla. Detected throughout the entire gastrointestinal tract, with high expression detected in stomach, duodenum and ascending colon. In gastric epithelium; expressed in the glands within the fundus and pylorus regions.

It localises to the golgi apparatus membrane. The protein localises to the golgi apparatus. The protein resides in the trans-Golgi network membrane. Its subcellular location is the endosome. It is found in the multivesicular body membrane. It localises to the apical cell membrane. The protein localises to the cytoplasmic vesicle. The protein resides in the secretory vesicle. Its subcellular location is the acrosome. The catalysed reaction is Na(+)(in) + H(+)(out) = Na(+)(out) + H(+)(in). Functionally, na(+)/H(+) antiporter. Mediates the electoneutral exchange of intracellular H(+) ions for extracellular Na(+) in 1:1 stoichiometry. Acts as an Na(+)/H(+) exchanger in the trans-Golgi. Contributes to the regulation of pH regulation of Golgi apparatus, and consequently, in protein trafficking and endosomal morphology. Plays a crucial role in germ cells in acrosome biogenesis and sperm development, probably by playing a role in the fusion of the Golgi-derived vesicles that form the acrosomal cap. Can also be active at the cell surface of specialized cells. In the small intestine, plays a major physiological role in transepithelial absorption of Na(+). Regulates intracellular pH homeostasis of intestinal epithelial cells. Acts as an important regulator of mucosal integrity in the intestine and in the stomach, could mediate the pH fluctuation necessary for mucin exocytosis or assist membrane trafficking of other proteins. Plays a role in photoreceptor survival and in the maintenance of intracellular pH homeostasis in retinal pigment epithelium (RPE cells). This Mus musculus (Mouse) protein is Sodium/hydrogen exchanger 8 (Slc9a8).